We begin with the raw amino-acid sequence, 428 residues long: F-box/LRR-repeat protein 3 (428 aa).

Over residues 1-21 (MKRGGRDSDRNSSEEGTAEKS) the composition is skewed to basic and acidic residues. Residues 1–27 (MKRGGRDSDRNSSEEGTAEKSKKLRTT) are disordered. Residues 34-81 (CDWGNLLQDIILQVFKYLPLLDRAHASQVCRNWNQVFHMPDLWRCFEF) enclose the F-box domain. LRR repeat units follow at residues 119-146 (SSKESAEAACDILSQLVNCSLKTLGLIS), 181-207 (DTPVDDPSLKVLVANNSDTLKLLKMSS), 208-233 (CPHVSPAGILCVADQCHGLRELALNY), 234-259 (HLLSDELLLALSSEKHVRLEHLRIDV), 316-341 (GRSVSKDVLGRVGMTCPRLVELVVCA), 343-368 (GLRPLDEELIRIAERCKNLSAIGLGE), and 369-394 (CEVSCSAFVEFVKMCGGRLSQLSIME).

Part of the SCF (SKP1-CUL1-F-box) E3 ubiquitin-protein ligase complex SCF(FBXL3) composed of CUL1, SKP1, RBX1 and FBXL3. Interacts with CRY1 and CRY2 (phosphorylated). Interacts with HDAC3. Interacts with KDM8. Post-translationally, undergoes autophagy-mediated degradation in the liver in a time-dependent manner. In terms of tissue distribution, widely expressed.

It is found in the nucleus. The protein localises to the cytoplasm. It participates in protein modification; protein ubiquitination. Its function is as follows. Substrate-recognition component of the SCF(FBXL3) E3 ubiquitin ligase complex involved in circadian rhythm function. Plays a key role in the maintenance of both the speed and the robustness of the circadian clock oscillation. The SCF(FBXL3) complex mainly acts in the nucleus and mediates ubiquitination and subsequent degradation of CRY1 and CRY2. Activity of the SCF(FBXL3) complex is counteracted by the SCF(FBXL21) complex. This chain is F-box/LRR-repeat protein 3 (FBXL3), found in Homo sapiens (Human).